The sequence spans 117 residues: Large ribosomal subunit protein bL20 (117 aa).

The protein belongs to the bacterial ribosomal protein bL20 family.

Its function is as follows. Binds directly to 23S ribosomal RNA and is necessary for the in vitro assembly process of the 50S ribosomal subunit. It is not involved in the protein synthesizing functions of that subunit. The chain is Large ribosomal subunit protein bL20 from Rippkaea orientalis (strain PCC 8801 / RF-1) (Cyanothece sp. (strain PCC 8801)).